The primary structure comprises 663 residues: DNA ligase (663 aa).

NAD(+) contacts are provided by residues 33-37 (DYSYD), 82-83 (SI), and E112. Catalysis depends on K114, which acts as the N6-AMP-lysine intermediate. Positions 135, 171, 285, and 309 each coordinate NAD(+). Residues C403, C406, C419, and C424 each coordinate Zn(2+). In terms of domain architecture, BRCT spans 581–663 (DKEAPLQGKV…LRILDAKSVS (83 aa)).

Belongs to the NAD-dependent DNA ligase family. LigA subfamily. It depends on Mg(2+) as a cofactor. The cofactor is Mn(2+).

It catalyses the reaction NAD(+) + (deoxyribonucleotide)n-3'-hydroxyl + 5'-phospho-(deoxyribonucleotide)m = (deoxyribonucleotide)n+m + AMP + beta-nicotinamide D-nucleotide.. Functionally, DNA ligase that catalyzes the formation of phosphodiester linkages between 5'-phosphoryl and 3'-hydroxyl groups in double-stranded DNA using NAD as a coenzyme and as the energy source for the reaction. It is essential for DNA replication and repair of damaged DNA. The sequence is that of DNA ligase from Chlamydia trachomatis serovar A (strain ATCC VR-571B / DSM 19440 / HAR-13).